The following is a 150-amino-acid chain: Macrodomain Ter protein (150 aa).

This sequence belongs to the MatP family. In terms of assembly, homodimer.

It localises to the cytoplasm. Functionally, required for spatial organization of the terminus region of the chromosome (Ter macrodomain) during the cell cycle. Prevents early segregation of duplicated Ter macrodomains during cell division. Binds specifically to matS, which is a 13 bp signature motif repeated within the Ter macrodomain. The sequence is that of Macrodomain Ter protein from Salmonella arizonae (strain ATCC BAA-731 / CDC346-86 / RSK2980).